A 402-amino-acid chain; its full sequence is DNA polymerase IV (402 aa).

The UmuC domain occupies 5–187 (ILLADMNSFY…LPVRELFGVG (183 aa)). Residues Asp-9 and Asp-105 each coordinate Mg(2+). Glu-106 is a catalytic residue.

The protein belongs to the DNA polymerase type-Y family. As to quaternary structure, monomer. The cofactor is Mg(2+).

The protein resides in the cytoplasm. It catalyses the reaction DNA(n) + a 2'-deoxyribonucleoside 5'-triphosphate = DNA(n+1) + diphosphate. Functionally, poorly processive, error-prone DNA polymerase involved in untargeted mutagenesis. Copies undamaged DNA at stalled replication forks, which arise in vivo from mismatched or misaligned primer ends. These misaligned primers can be extended by PolIV. Exhibits no 3'-5' exonuclease (proofreading) activity. May be involved in translesional synthesis, in conjunction with the beta clamp from PolIII. The chain is DNA polymerase IV from Pelotomaculum thermopropionicum (strain DSM 13744 / JCM 10971 / SI).